Here is a 510-residue protein sequence, read N- to C-terminus: NAD(P)H-quinone oxidoreductase subunit 2, chloroplastic (510 aa).

The next 13 membrane-spanning stretches (helical) occupy residues 24–44, 59–79, 99–119, 124–144, 149–169, 183–203, 229–249, 295–315, 323–343, 347–367, 395–415, 418–438, and 484–504; these read LLLF…GLIL, WFYF…LFRW, IFQF…VEYI, MAIT…MFLC, XITI…LSGY, YLLM…WLYG, ISIA…PAPF, WHLL…LIAI, MLAY…IVGD, GYAS…GTFA, ALSS…AGFF, LHLF…IGLL, and MTVC…ILAI.

It belongs to the complex I subunit 2 family. In terms of assembly, NDH is composed of at least 16 different subunits, 5 of which are encoded in the nucleus.

It localises to the plastid. Its subcellular location is the chloroplast thylakoid membrane. It catalyses the reaction a plastoquinone + NADH + (n+1) H(+)(in) = a plastoquinol + NAD(+) + n H(+)(out). It carries out the reaction a plastoquinone + NADPH + (n+1) H(+)(in) = a plastoquinol + NADP(+) + n H(+)(out). Functionally, NDH shuttles electrons from NAD(P)H:plastoquinone, via FMN and iron-sulfur (Fe-S) centers, to quinones in the photosynthetic chain and possibly in a chloroplast respiratory chain. The immediate electron acceptor for the enzyme in this species is believed to be plastoquinone. Couples the redox reaction to proton translocation, and thus conserves the redox energy in a proton gradient. The protein is NAD(P)H-quinone oxidoreductase subunit 2, chloroplastic of Narcissus elegans (Daffodil).